The sequence spans 387 residues: Apoptosis-inducing factor homolog B (387 aa).

FAD contacts are provided by residues 12–16, Arg-47, and Asp-292; that span reads GGGYG.

This sequence belongs to the FAD-dependent oxidoreductase family. Requires FAD as cofactor.

Functionally, putative FAD-dependent oxidoreductase. The protein is Apoptosis-inducing factor homolog B (aifB) of Dictyostelium discoideum (Social amoeba).